A 259-amino-acid chain; its full sequence is ATP synthase subunit a (259 aa).

Residues 1 to 7 constitute a propeptide, removed in mature form; sequence MTNNYIN. Transmembrane regions (helical) follow at residues 36–56, 95–115, 125–145, 164–206, and 211–253; these read FSLY…LSIG, YVPL…IGMV, LIYI…LGLF, LVPV…NLVK, and INYF…SYLK.

As to quaternary structure, F-type ATP synthases have 2 components, the catalytic core F(1) and the membrane-embedded component F(0), linked together by a central stalk and a peripheral stalk. The central stalk, also called rotor shaft, is often seen as part of F(1). The peripheral stalk is seen as part of F(0). F(0) contains the membrane channel next to the rotor. F-type ATP synthases form dimers but each monomer functions independently in ATP generation. The dimer consists of 18 different polypeptides: ATP1 (subunit alpha, part of F(1), 3 molecules per monomer), ATP2 (subunit beta, part of F(1), 3 molecules per monomer), ATP3 (subunit gamma, part of the central stalk), ATP4 (subunit b, part of the peripheral stalk), ATP5/OSCP (subunit 5/OSCP, part of the peripheral stalk), ATP6 (subunit a, part of the peripheral stalk), ATP7 (subunit d, part of the peripheral stalk), ATP8 (subunit 8, part of the peripheral stalk), OLI1 (subunit c, part of the rotor, 10 molecules per monomer), ATP14 (subunit h, part of the peripheral stalk), ATP15 (subunit epsilon, part of the central stalk), ATP16 (subunit delta, part of the central stalk), ATP17 (subunit f, part of the peripheral stalk), ATP18 (subunit i/j, part of the peripheral stalk). Dimer-specific subunits are ATP19 (subunit k, at interface between monomers), ATP20 (subunit g, at interface between monomers), TIM11 (subunit e, at interface between monomers). Also contains subunit L.

It is found in the mitochondrion inner membrane. In terms of biological role, mitochondrial membrane ATP synthase (F(1)F(0) ATP synthase or Complex V) produces ATP from ADP in the presence of a proton gradient across the membrane which is generated by electron transport complexes of the respiratory chain. F-type ATP synthases consist of two structural domains, F(1) - containing the extramembraneous catalytic core, and F(0) - containing the membrane proton channel, linked together by a central stalk and a peripheral stalk. During catalysis, ATP synthesis in the catalytic domain of F(1) is coupled via a rotary mechanism of the central stalk subunits to proton translocation. Key component of the proton channel; it may play a direct role in the translocation of protons across the membrane. The polypeptide is ATP synthase subunit a (Pichia angusta (Yeast)).